A 447-amino-acid chain; its full sequence is C4-dicarboxylate transport protein (447 aa).

Helical transmembrane passes span 21-41, 57-77, 92-112, 141-161, 163-183, 201-221, 232-252, 320-340, 345-365, and 368-388; these read HLYV…YFAP, LVKM…IAGM, IYFL…VNIV, SLIG…LASG, ILQV…VGEA, LVAI…AYTV, LAML…IVLG, IYMT…LSWG, LLAV…AGFV, and AATL…IFGV.

The protein belongs to the dicarboxylate/amino acid:cation symporter (DAACS) (TC 2.A.23) family.

It localises to the cell inner membrane. In terms of biological role, responsible for the transport of dicarboxylates such as succinate, fumarate, and malate from the periplasm across the membrane. In Granulibacter bethesdensis (strain ATCC BAA-1260 / CGDNIH1), this protein is C4-dicarboxylate transport protein.